Here is a 252-residue protein sequence, read N- to C-terminus: Chitooligosaccharide deacetylase (252 aa).

H61 and H125 together coordinate Mg(2+).

The protein belongs to the YdjC deacetylase family. ChbG subfamily. Homodimer. Mg(2+) is required as a cofactor.

The protein resides in the cytoplasm. It carries out the reaction N,N'-diacetylchitobiose + H2O = N-acetyl-beta-D-glucosaminyl-(1-&gt;4)-D-glucosamine + acetate. It catalyses the reaction diacetylchitobiose-6'-phosphate + H2O = N'-monoacetylchitobiose-6'-phosphate + acetate. It participates in glycan degradation; chitin degradation. Its function is as follows. Involved in the degradation of chitin. ChbG is essential for growth on the acetylated chitooligosaccharides chitobiose and chitotriose but is dispensable for growth on cellobiose and chitosan dimer, the deacetylated form of chitobiose. Deacetylation of chitobiose-6-P and chitotriose-6-P is necessary for both the activation of the chb promoter by the regulatory protein ChbR and the hydrolysis of phosphorylated beta-glucosides by the phospho-beta-glucosidase ChbF. Catalyzes the removal of only one acetyl group from chitobiose-6-P to yield monoacetylchitobiose-6-P, the inducer of ChbR and the substrate of ChbF. This chain is Chitooligosaccharide deacetylase, found in Citrobacter koseri (strain ATCC BAA-895 / CDC 4225-83 / SGSC4696).